A 530-amino-acid polypeptide reads, in one-letter code: Bifunctional purine biosynthesis protein PurH (530 aa).

Positions 1–149 (MASDFLPVHR…KNFARVAVAT (149 aa)) constitute an MGS-like domain.

This sequence belongs to the PurH family.

The enzyme catalyses (6R)-10-formyltetrahydrofolate + 5-amino-1-(5-phospho-beta-D-ribosyl)imidazole-4-carboxamide = 5-formamido-1-(5-phospho-D-ribosyl)imidazole-4-carboxamide + (6S)-5,6,7,8-tetrahydrofolate. The catalysed reaction is IMP + H2O = 5-formamido-1-(5-phospho-D-ribosyl)imidazole-4-carboxamide. It functions in the pathway purine metabolism; IMP biosynthesis via de novo pathway; 5-formamido-1-(5-phospho-D-ribosyl)imidazole-4-carboxamide from 5-amino-1-(5-phospho-D-ribosyl)imidazole-4-carboxamide (10-formyl THF route): step 1/1. Its pathway is purine metabolism; IMP biosynthesis via de novo pathway; IMP from 5-formamido-1-(5-phospho-D-ribosyl)imidazole-4-carboxamide: step 1/1. This Xylella fastidiosa (strain M12) protein is Bifunctional purine biosynthesis protein PurH.